Consider the following 259-residue polypeptide: MAKRIDVSGLHVYYGDFLAVEDVSMTIEPRSVTAFIGSSGCGKSTFLRTLNRMHEVTPGARVEGKVLLDDQDIYAPDVDPVEVRREVGMVFQRPNPFPTMSIYDNVIAGYKLNNRRLRKSEADEIVERSLRGANLWEEVKDRLDRPGASLSGGQQQRLCIARAIAVEPSVLLMDEPCSALDPISTLAIEDLISQLKENYTIVIVTHNMQQAARVSDVTAFFNLAGTGKPGKLIEIGETNKIFTKPEKKETENYITGRFG.

The ABC transporter domain occupies 5-248; sequence IDVSGLHVYY…NKIFTKPEKK (244 aa). 37–44 lines the ATP pocket; the sequence is GSSGCGKS.

This sequence belongs to the ABC transporter superfamily. Phosphate importer (TC 3.A.1.7) family. In terms of assembly, the complex is composed of two ATP-binding proteins (PstB), two transmembrane proteins (PstC and PstA) and a solute-binding protein (PstS).

Its subcellular location is the cell membrane. The enzyme catalyses phosphate(out) + ATP + H2O = ADP + 2 phosphate(in) + H(+). In terms of biological role, part of the ABC transporter complex PstSACB involved in phosphate import. Responsible for energy coupling to the transport system. The protein is Phosphate import ATP-binding protein PstB of Thermobifida fusca (strain YX).